We begin with the raw amino-acid sequence, 202 residues long: Small ribosomal subunit protein uS4c (202 aa).

Positions 89–152 (MRLDNIIFRL…QSNTFINNCI (64 aa)) constitute an S4 RNA-binding domain.

It belongs to the universal ribosomal protein uS4 family. In terms of assembly, part of the 30S ribosomal subunit. Contacts protein S5. The interaction surface between S4 and S5 is involved in control of translational fidelity.

It is found in the plastid. Its function is as follows. One of the primary rRNA binding proteins, it binds directly to 16S rRNA where it nucleates assembly of the body of the 30S subunit. With S5 and S12 plays an important role in translational accuracy. This chain is Small ribosomal subunit protein uS4c (rps4), found in Epifagus virginiana (Beechdrops).